The primary structure comprises 342 residues: Sesquiterpene synthase MBR_09977 (342 aa).

Residues D91 and D96 each contribute to the Mg(2+) site. A DDXXXD motif motif is present at residues 91-96 (DDLFVD). R184 lines the substrate pocket. Positions 230, 234, and 238 each coordinate Mg(2+).

This sequence belongs to the terpene synthase family. The cofactor is Mg(2+).

It carries out the reaction (2E,6E)-farnesyl diphosphate + H2O = (+)-corvol ether B + diphosphate. The enzyme catalyses (2E,6E)-farnesyl diphosphate + H2O = (+)-corvol ether A + diphosphate. Terpene synthase that catalyzes the conversion of (2E,6E)-farnesyl diphosphate (FPP) into sesquiterpenes which are important for fungi-environment interactions. Produces a mixture consisting of 8 sesquiterpenes including corvol ethers A and B, as well as traces of epizonarene, gamma-cadinene, delta-cadinene, alpha-cadinene, alpha-cadinol, and an unidentified sesquiterpene. The major product is corvol ether A. In Metarhizium brunneum (strain ARSEF 3297), this protein is Sesquiterpene synthase MBR_09977.